A 356-amino-acid chain; its full sequence is Nicotinate-nucleotide--dimethylbenzimidazole phosphoribosyltransferase (356 aa).

Glu-317 (proton acceptor) is an active-site residue.

The protein belongs to the CobT family. As to quaternary structure, homodimer.

The catalysed reaction is 5,6-dimethylbenzimidazole + nicotinate beta-D-ribonucleotide = alpha-ribazole 5'-phosphate + nicotinate + H(+). It participates in nucleoside biosynthesis; alpha-ribazole biosynthesis; alpha-ribazole from 5,6-dimethylbenzimidazole: step 1/2. In terms of biological role, catalyzes the synthesis of alpha-ribazole-5'-phosphate from nicotinate mononucleotide (NAMN) and 5,6-dimethylbenzimidazole (DMB). This Salmonella agona (strain SL483) protein is Nicotinate-nucleotide--dimethylbenzimidazole phosphoribosyltransferase.